A 510-amino-acid polypeptide reads, in one-letter code: Lysine--tRNA ligase (510 aa).

Mg(2+) is bound by residues Glu-420 and Glu-427.

This sequence belongs to the class-II aminoacyl-tRNA synthetase family. In terms of assembly, homodimer. The cofactor is Mg(2+).

The protein localises to the cytoplasm. The catalysed reaction is tRNA(Lys) + L-lysine + ATP = L-lysyl-tRNA(Lys) + AMP + diphosphate. This chain is Lysine--tRNA ligase, found in Ralstonia nicotianae (strain ATCC BAA-1114 / GMI1000) (Ralstonia solanacearum).